Consider the following 124-residue polypeptide: uncharacterized protein (124 aa).

Helical transmembrane passes span 14 to 34 (KAIV…YGWQ), 41 to 61 (FSYG…IIFY), and 85 to 105 (MVFI…AFFV).

It localises to the cell membrane. This is an uncharacterized protein from Haemophilus influenzae (strain ATCC 51907 / DSM 11121 / KW20 / Rd).